The primary structure comprises 846 residues: MGELEEKETPPTETTAAQQEALEEPKETDKMLDKKEDAKEKTPSPQTSKPASPNAGKKSSPVAEKKIDDAELAKSKSGNGEEIIDIPAENGTKPDSADDKKISKEEREVKPKKIPIGGLKLPGFFMKNKPKADGDGAEGELLEKEKEEDKDKEANGDAATGSGKDEQKSRPGLGERLRSFFARKPSAEKEKKQLVNGDADAKSEATAEATPAEDASDAPPKRGLLNAIKLPIANMIPKKKSNDDVELGLGKAGLASMETLDDSLKDQDTVDRAPVKTNGTEELKGELKDEKLAAEEKLAAEEEEQNRPVSLLTRLRGYKCSVDDALIVFGILLFVLLLGVIGYVLTHETLTSPPLREGRYIMAVTGCGPVEGVKEDGAFAFRGIPYAKPPVDRLRWKPAELIDDINMCWNDTLQTHNSSVVCTQRLGNGTTVGDEDCLYLDVVTPHVRYNNPLPVVVLIGAESLAGPSPGILRPSARYSRSHDVIFVRPNFRLGVFGFLALDALTKEAHPPTSGNYALTDIIAVLNWIKLNIVHFGGDPQSVTLLGHRAGATLVTLLVNSQKVKGLYTRAWASSGSAILPGKPLSESGKQNEQLMATLECADIQCLREASSERLWAATPDTWLHFPVDLPQPQEANASGSRHEWLVLDGDVVFEHPSDTWKREQANDKPVLVMGATAHEAHTEKLRELHANWTREEVRAYLENSQIGALGLTDEVIEKYNASSYASLVSIISDIRSVCPLLTNARQQPSVPFYVVTQGEGPDQLATVDADVQAILGRYEPHTVEQRRFVSAMQQLFYYYVSHGTVQSFVQNRRVINVGQDAQPEEDYLPCNYWISKDIVPRYARVD.

Residues 1–222 (MGELEEKETP…EDASDAPPKR (222 aa)) form a disordered region. The Cytoplasmic portion of the chain corresponds to 1 to 324 (MGELEEKETP…LRGYKCSVDD (324 aa)). The span at 11-20 (PTETTAAQQE) shows a compositional bias: low complexity. The span at 23-42 (EEPKETDKMLDKKEDAKEKT) shows a compositional bias: basic and acidic residues. T28 carries the post-translational modification Phosphothreonine; by PKC. The residue at position 42 (T42) is a Phosphothreonine. Position 44 is a phosphoserine (S44). The residue at position 47 (T47) is a Phosphothreonine. S48 and S52 each carry phosphoserine. The segment covering 63 to 74 (AEKKIDDAELAK) has biased composition (basic and acidic residues). Phosphoserine; by PKC is present on S75. Position 77 is a phosphoserine (S77). 4 stretches are compositionally biased toward basic and acidic residues: residues 95 to 111 (DSADDKKISKEEREVKP), 141 to 155 (LLEKEKEEDKDKEAN), 163 to 178 (GKDEQKSRPGLGERLR), and 185 to 205 (PSAEKEKKQLVNGDADAKSEA). The residue at position 103 (S103) is a Phosphoserine; by PKC. Residue S169 is modified to Phosphoserine; by PKC. Residues S186 and S203 each carry the phosphoserine modification. T206 carries the phosphothreonine modification. S256 carries the phosphoserine modification. Residue T259 is modified to Phosphothreonine. S263 is modified (phosphoserine). T269 carries the phosphothreonine modification. The helical; Signal-anchor for type II membrane protein transmembrane segment at 325–346 (ALIVFGILLFVLLLGVIGYVLT) threads the bilayer. The Extracellular portion of the chain corresponds to 347 to 846 (HETLTSPPLR…DIVPRYARVD (500 aa)). Residues N410, N417, and N428 are each glycosylated (N-linked (GlcNAc...) asparagine). 2 disulfides stabilise this stretch: C422–C437 and C600–C605. 3 N-linked (GlcNAc...) asparagine glycosylation sites follow: N636, N691, and N720. Residues C738 and C830 are joined by a disulfide bond.

It in the C-terminal section; belongs to the type-B carboxylesterase/lipase family. In terms of tissue distribution, late in embryogenesis, expression is restricted to cells of the peripheral and central nervous system undergoing proliferation and differentiation. Also expressed in larval CNS, mesoderm and imaginal disks.

Its subcellular location is the membrane. Its function is as follows. May mediate or modulate cell adhesion between embryonic cells during development. The chain is Neurotactin (Nrt) from Drosophila melanogaster (Fruit fly).